A 228-amino-acid polypeptide reads, in one-letter code: L-ribulose-5-phosphate 4-epimerase UlaF (228 aa).

Substrate contacts are provided by residues 26–27 (GN), 43–44 (SG), and 72–73 (SS). Zn(2+) contacts are provided by D74, H93, and H95. The active-site Proton donor/acceptor is the D118. H167 is a Zn(2+) binding site. The active-site Proton donor/acceptor is Y225.

The protein belongs to the aldolase class II family. AraD/FucA subfamily. It depends on Zn(2+) as a cofactor.

It catalyses the reaction L-ribulose 5-phosphate = D-xylulose 5-phosphate. It participates in cofactor degradation; L-ascorbate degradation; D-xylulose 5-phosphate from L-ascorbate: step 4/4. In terms of biological role, catalyzes the isomerization of L-ribulose 5-phosphate to D-xylulose 5-phosphate. Is involved in the anaerobic L-ascorbate utilization. The chain is L-ribulose-5-phosphate 4-epimerase UlaF from Salmonella paratyphi A (strain ATCC 9150 / SARB42).